The following is a 550-amino-acid chain: Hydroxylamine reductase (550 aa).

[2Fe-2S] cluster-binding residues include cysteine 3, cysteine 6, cysteine 18, and cysteine 25. Histidine 249, glutamate 273, cysteine 317, cysteine 405, cysteine 433, cysteine 458, glutamate 492, and lysine 494 together coordinate hybrid [4Fe-2O-2S] cluster. At cysteine 405 the chain carries Cysteine persulfide.

It belongs to the HCP family. Requires [2Fe-2S] cluster as cofactor. The cofactor is hybrid [4Fe-2O-2S] cluster.

Its subcellular location is the cytoplasm. The catalysed reaction is A + NH4(+) + H2O = hydroxylamine + AH2 + H(+). In terms of biological role, catalyzes the reduction of hydroxylamine to form NH(3) and H(2)O. This chain is Hydroxylamine reductase, found in Enterobacter sp. (strain 638).